Consider the following 426-residue polypeptide: uncharacterized protein (426 aa).

It belongs to the serpin family.

This is an uncharacterized protein from Methanosarcina acetivorans (strain ATCC 35395 / DSM 2834 / JCM 12185 / C2A).